The primary structure comprises 307 residues: Oxygen-dependent coproporphyrinogen-III oxidase (307 aa).

Serine 99 lines the substrate pocket. Residues histidine 103 and histidine 113 each coordinate a divalent metal cation. Histidine 113 acts as the Proton donor in catalysis. 115-117 is a substrate binding site; the sequence is NVR. 2 residues coordinate a divalent metal cation: histidine 152 and histidine 182. An important for dimerization region spans residues 247-282; sequence YVEFNLVFDRGTLFGLQSGGRTESILMSMPPVANWR. A substrate-binding site is contributed by 265–267; that stretch reads GGR.

It belongs to the aerobic coproporphyrinogen-III oxidase family. In terms of assembly, homodimer. A divalent metal cation serves as cofactor.

Its subcellular location is the cytoplasm. It catalyses the reaction coproporphyrinogen III + O2 + 2 H(+) = protoporphyrinogen IX + 2 CO2 + 2 H2O. It participates in porphyrin-containing compound metabolism; protoporphyrin-IX biosynthesis; protoporphyrinogen-IX from coproporphyrinogen-III (O2 route): step 1/1. Functionally, involved in the heme biosynthesis. Catalyzes the aerobic oxidative decarboxylation of propionate groups of rings A and B of coproporphyrinogen-III to yield the vinyl groups in protoporphyrinogen-IX. The polypeptide is Oxygen-dependent coproporphyrinogen-III oxidase (Burkholderia orbicola (strain MC0-3)).